The chain runs to 360 residues: tRNA (guanine-N(7)-)-methyltransferase (360 aa).

The interval 1–32 (MTPPPPKRQKRDEYRKATAEAASQPGPSDVAE) is disordered. Residues Gly99 and 122-123 (EI) each bind S-adenosyl-L-methionine. Residues 177–196 (ADAASPVLSTDTEHTPTTLV) are disordered. Residues 183-196 (VLSTDTEHTPTTLV) show a composition bias toward polar residues. Residues 209–210 (NT) and Cys229 each bind S-adenosyl-L-methionine. Asp232 is an active-site residue. 332–334 (TEE) is an S-adenosyl-L-methionine binding site.

Belongs to the class I-like SAM-binding methyltransferase superfamily. TrmB family. As to quaternary structure, forms a complex with trm82.

It localises to the nucleus. The catalysed reaction is guanosine(46) in tRNA + S-adenosyl-L-methionine = N(7)-methylguanosine(46) in tRNA + S-adenosyl-L-homocysteine. It functions in the pathway tRNA modification; N(7)-methylguanine-tRNA biosynthesis. Its function is as follows. Catalyzes the formation of N(7)-methylguanine at position 46 (m7G46) in tRNA. In Neosartorya fischeri (strain ATCC 1020 / DSM 3700 / CBS 544.65 / FGSC A1164 / JCM 1740 / NRRL 181 / WB 181) (Aspergillus fischerianus), this protein is tRNA (guanine-N(7)-)-methyltransferase (trm8).